A 1010-amino-acid polypeptide reads, in one-letter code: Translation initiation factor IF-2 (1010 aa).

2 disordered regions span residues 54–350 (KGLA…FEDD) and 364–420 (PSFT…RPES). Residues 57-70 (ASSTSKNSTGQRES) show a composition bias toward polar residues. Over residues 112–124 (ISPPRPPVKPLVA) the composition is skewed to pro residues. Positions 145 to 155 (HSPSVKETPTE) are enriched in polar residues. Residues 200 to 258 (DRPRGEKRERGESENAPSPERRVGLAKPEKPTLNRKPDGKSPKLAEPAREVRETVELKR) show a composition bias toward basic and acidic residues. The span at 378 to 389 (TAKAAPPGTPTA) shows a compositional bias: low complexity. The segment covering 406–419 (KSERQEPQEEKRPE) has biased composition (basic and acidic residues). The 174-residue stretch at 502–675 (RRPPVVTIMG…LLVAEVEELV (174 aa)) folds into the tr-type G domain. The interval 511–518 (GHVDHGKT) is G1. 511-518 (GHVDHGKT) lines the GTP pocket. A G2 region spans residues 536–540 (GITQH). The interval 561-564 (DTPG) is G3. GTP contacts are provided by residues 561 to 565 (DTPGH) and 615 to 618 (NKVD). Residues 615-618 (NKVD) form a G4 region. A G5 region spans residues 651–653 (SAL).

It belongs to the TRAFAC class translation factor GTPase superfamily. Classic translation factor GTPase family. IF-2 subfamily.

The protein resides in the cytoplasm. One of the essential components for the initiation of protein synthesis. Protects formylmethionyl-tRNA from spontaneous hydrolysis and promotes its binding to the 30S ribosomal subunits. Also involved in the hydrolysis of GTP during the formation of the 70S ribosomal complex. The protein is Translation initiation factor IF-2 of Microcystis aeruginosa (strain NIES-843 / IAM M-2473).